The chain runs to 692 residues: MNGKEVSSGSGRTQSNNNKKNNNGGSTGISHASGSPLTDGNGGNSNGNSRSRSRSRKSSGTTGGLLKKPPLLVNNEAVHASVPDASHTSCNNGTLEVSINNPEPHVVDAVARHLIRNPSNSLQLQGGDITRDLYKWTNDHPSSPSQYQYPSQPALSTSIPSQAPSFSNRKRSMSFSAASIASSSHLNNNSEANGNPLAAIGLAPAPMTHEEIRAPGGFRRSFIIQKRRKHNVDAPIPNFFTRNFIEFLTLYGHFAGEDLSEEEEEEEETEEEPEEEALETESTQLVSREHGRHPHKSSTVKAVLLLLKSFVGTGVLFLPKAFHNGGWGFSALCLLSCALISYGCFVSLITTKDKVGVDGYGDMGRILYGPKMKFAILSSIALSQIGFSAAYTVFTATNLQVFSENFFHLKPGSISLATYIFAQVLIFVPLSLTRNIAKLSGTALIADLFILLGLVYVYVYSIYYIAVNGVASDTMLMFNKADWSLFIGTAIFTFEGIGLLIPIQESMKHPKHFRPSLSAVMCIVAVIFISCGLLCYAAFGSDVKTVVLLNFPQDTSYTLTVQLLYALAILLSTPLQLFPAIRILENWTFPSNASGKYNPKVKWLKNYFRCAIVVLTSILAWVGANDLDKFVSLVGSFACIPLIYIYPPLLHYKASILSGTSRARLLLDLIVIVFGVAVMAYTSWQTIKMWSQ.

A compositionally biased stretch (polar residues) spans 1-14 (MNGKEVSSGSGRTQ). The interval 1–71 (MNGKEVSSGS…TGGLLKKPPL (71 aa)) is disordered. Over residues 15 to 24 (SNNNKKNNNG) the composition is skewed to low complexity. Residues 28–38 (GISHASGSPLT) show a composition bias toward polar residues. Ser-59, Ser-119, and Ser-121 each carry phosphoserine. Disordered stretches follow at residues 135–170 (KWTN…SNRK) and 258–294 (DLSE…GRHP). Positions 141–153 (PSSPSQYQYPSQP) are enriched in low complexity. The segment covering 154 to 167 (ALSTSIPSQAPSFS) has biased composition (polar residues). Ser-165 carries the post-translational modification Phosphoserine. Residues 258-279 (DLSEEEEEEEETEEEPEEEALE) are compositionally biased toward acidic residues. Helical transmembrane passes span 302 to 322 (AVLL…PKAF), 329 to 349 (FSAL…VSLI), 374 to 394 (FAIL…YTVF), 412 to 432 (GSIS…PLSL), 443 to 463 (ALIA…YSIY), 483 to 503 (WSLF…LIPI), 519 to 539 (AVMC…YAAF), 561 to 581 (VQLL…FPAI), 607 to 627 (YFRC…ANDL), 630 to 650 (FVSL…PPLL), and 665 to 685 (LLLD…TSWQ).

It belongs to the amino acid/polyamine transporter 2 family.

The protein resides in the vacuole membrane. Its function is as follows. Involved in amino acid efflux from the vacuole to the cytoplasm. Capable of transporting large neutral amino acids including tyrosine, glutamine, asparagine, isoleucine and leucine. The chain is Vacuolar amino acid transporter 3 (AVT3) from Saccharomyces cerevisiae (strain ATCC 204508 / S288c) (Baker's yeast).